We begin with the raw amino-acid sequence, 437 residues long: Ribosomal protein uS12 methylthiotransferase RimO (437 aa).

The MTTase N-terminal domain maps to proline 4–proline 114. Cysteine 13, cysteine 49, cysteine 78, cysteine 145, cysteine 149, and cysteine 152 together coordinate [4Fe-4S] cluster. The region spanning leucine 131 to asparagine 369 is the Radical SAM core domain. A TRAM domain is found at lysine 372–valine 437.

Belongs to the methylthiotransferase family. RimO subfamily. [4Fe-4S] cluster is required as a cofactor.

The protein resides in the cytoplasm. It catalyses the reaction L-aspartate(89)-[ribosomal protein uS12]-hydrogen + (sulfur carrier)-SH + AH2 + 2 S-adenosyl-L-methionine = 3-methylsulfanyl-L-aspartate(89)-[ribosomal protein uS12]-hydrogen + (sulfur carrier)-H + 5'-deoxyadenosine + L-methionine + A + S-adenosyl-L-homocysteine + 2 H(+). Its function is as follows. Catalyzes the methylthiolation of an aspartic acid residue of ribosomal protein uS12. In Brucella abortus (strain S19), this protein is Ribosomal protein uS12 methylthiotransferase RimO.